Reading from the N-terminus, the 465-residue chain is Asparagine--tRNA ligase (465 aa).

Belongs to the class-II aminoacyl-tRNA synthetase family. Homodimer.

It localises to the cytoplasm. It carries out the reaction tRNA(Asn) + L-asparagine + ATP = L-asparaginyl-tRNA(Asn) + AMP + diphosphate + H(+). This chain is Asparagine--tRNA ligase, found in Hahella chejuensis (strain KCTC 2396).